Reading from the N-terminus, the 65-residue chain is Beta-defensin 106A (65 aa).

Positions M1–A20 are cleaved as a signal peptide. Intrachain disulfides connect C26–C53, C33–C47, and C37–C54.

Belongs to the beta-defensin family. As to quaternary structure, monomer. Interacts with CCR2 (via extracellular N-terminal region); this interaction may preferentially require specific tyrosine sulfation on CCR2.

The protein localises to the secreted. The protein resides in the membrane. Its function is as follows. Has antibacterial activity. Acts as a ligand for C-C chemokine receptor CCR2. In Hylobates lar (Lar gibbon), this protein is Beta-defensin 106A (DEFB106A).